Consider the following 964-residue polypeptide: Siderophore exporter MmpL5 (964 aa).

12 helical membrane-spanning segments follow: residues 31–51 (FAVPIILGWLVTIAVLNVTVP), 203–223 (SLQVIEAVTFTVIIVMLLLVY), 230–250 (AIMLTMVVLGLLATRGGVAFL), 255–275 (IIGLSTFATNLLVVLAIAAAT), 302–322 (MFGGTAHVVLGSGLTIAGATF), 340–360 (AIGMVIVVAAALTLGPAIIAV), 389–409 (WPGPILVGAVALALVGLLTLP), 773–793 (TYDLMIAGISALCLIFIIMLI), 803–823 (VIVGTVVLSLGASFGLSVLIW), 826–846 (ILGIELHWLVLAMAVIILLAV), 880–900 (VVTAAGLVFAFTMMSFAVSEL), and 923–943 (SFMTPSIAALLGKWFWWPQVV).

The protein belongs to the resistance-nodulation-cell division (RND) (TC 2.A.6) family. MmpL subfamily. As to quaternary structure, interacts with MmpS5.

It is found in the cell inner membrane. Part of an export system, which is required for biosynthesis and secretion of siderophores. The polypeptide is Siderophore exporter MmpL5 (mmpL5) (Mycobacterium tuberculosis (strain CDC 1551 / Oshkosh)).